We begin with the raw amino-acid sequence, 333 residues long: Bifunctional phosphoglucose/phosphomannose isomerase (333 aa).

The region spanning Leu-22–Ala-160 is the SIS domain. 6 residues coordinate D-fructose 6-phosphate: Gly-39, Ser-40, Ser-84, Ser-86, Thr-89, and Arg-136. Glu-211 functions as the Proton acceptor in the catalytic mechanism. D-fructose 6-phosphate-binding residues include His-227 and Lys-322. His-227 functions as the Proton donor in the catalytic mechanism. The Proton acceptor role is filled by Lys-322.

It belongs to the PGI/PMI family. In terms of assembly, homodimer.

It catalyses the reaction alpha-D-glucose 6-phosphate = beta-D-fructose 6-phosphate. It carries out the reaction D-mannose 6-phosphate = D-fructose 6-phosphate. Inhibited by low concentrations of erythrose 4-phosphate and 6-phosphogluconate. Dual specificity isomerase that catalyzes the isomerization of both glucose-6-phosphate and mannose-6-phosphate to fructose-6-phosphate with similar catalytic efficiency. This Aeropyrum pernix (strain ATCC 700893 / DSM 11879 / JCM 9820 / NBRC 100138 / K1) protein is Bifunctional phosphoglucose/phosphomannose isomerase.